The chain runs to 638 residues: Probable beta-glucosidase C (638 aa).

The N-terminal stretch at 1–18 (MKVLAPGYLAEASLTALA) is a signal peptide. N40, N94, N116, N223, and N274 each carry an N-linked (GlcNAc...) asparagine glycan. The active site involves D341. Residues N364, N480, N488, and N528 are each glycosylated (N-linked (GlcNAc...) asparagine).

Belongs to the glycosyl hydrolase 3 family.

The protein resides in the secreted. It catalyses the reaction Hydrolysis of terminal, non-reducing beta-D-glucosyl residues with release of beta-D-glucose.. The protein operates within glycan metabolism; cellulose degradation. In terms of biological role, beta-glucosidases are one of a number of cellulolytic enzymes involved in the degradation of cellulosic biomass. Catalyzes the last step releasing glucose from the inhibitory cellobiose. The protein is Probable beta-glucosidase C (bglC) of Aspergillus oryzae (strain ATCC 42149 / RIB 40) (Yellow koji mold).